A 675-amino-acid polypeptide reads, in one-letter code: MAAQKKKAQDEYGAASITILEGLEAVRKRPGMYIGSTGERGLHHLIWEVVDNAVDEAMAGYATTVNVVLLEDGGVEVADDGRGIPVATHASGIPTVDVVMTQLHAGGKFDSDAYAISGGLHGVGVSVVNALSTRLEVEIKRDGYEWSQVYEKSEPLGLKQGAPTKKTGSTVRFWADPAVFETTEYDFETVARRLQEMAFLNKGLTINLTDERVTQDEVVDEVVSDVAEAPKSASERAAESTAPHKVKSRTFHYPGGLVDFVKHINRTKNAIHSSIVDFSGKGTGHEVEIAMQWNAGYSESVHTFANTINTHEGGTHEEGFRSALTSVVNKYAKDRKLLKDKDPNLTGDDIREGLAAVISVKVSEPQFEGQTKTKLGNTEVKSFVQKVCNEQLTHWFEANPTDAKVVVNKAVSSAQARIAARKARELVRRKSATDIGGLPGKLADCRSTDPRKSELYVVEGDSAGGSAKSGRDSMFQAILPLRGKIINVEKARIDRVLKNTEVQAIITALGTGIHDEFDIGKLRYHKIVLMADADVDGQHISTLLLTLLFRFMRPLIENGHVFLAQPPLYKLKWQRSDPEFAYSDRERDGLLEAGLKAGKKINKEDGIQRYKGLGEMDAKELWETTMDPSVRVLRQVTLDDAAAADELFSILMGEDVDARRSFITRNAKDVRFLDV.

The Toprim domain maps to 453 to 567 (SELYVVEGDS…NGHVFLAQPP (115 aa)). Positions 459, 532, and 534 each coordinate Mg(2+).

It belongs to the type II topoisomerase GyrB family. In terms of assembly, heterotetramer, composed of two GyrA and two GyrB chains. In the heterotetramer, GyrA contains the active site tyrosine that forms a transient covalent intermediate with DNA, while GyrB binds cofactors and catalyzes ATP hydrolysis. Mg(2+) serves as cofactor. The cofactor is Mn(2+). Requires Ca(2+) as cofactor.

The protein resides in the cytoplasm. The enzyme catalyses ATP-dependent breakage, passage and rejoining of double-stranded DNA.. Functionally, a type II topoisomerase that negatively supercoils closed circular double-stranded (ds) DNA in an ATP-dependent manner to modulate DNA topology and maintain chromosomes in an underwound state. Negative supercoiling favors strand separation, and DNA replication, transcription, recombination and repair, all of which involve strand separation. Also able to catalyze the interconversion of other topological isomers of dsDNA rings, including catenanes and knotted rings. Type II topoisomerases break and join 2 DNA strands simultaneously in an ATP-dependent manner. This is DNA gyrase subunit B from Mycobacterium tuberculosis (strain ATCC 25177 / H37Ra).